The following is a 217-amino-acid chain: Small ribosomal subunit protein uS3 (217 aa).

One can recognise a KH type-2 domain in the interval 40–110; sequence IRDVINKGFN…EVYINIHEVR (71 aa).

The protein belongs to the universal ribosomal protein uS3 family. Part of the 30S ribosomal subunit. Forms a tight complex with proteins S10 and S14.

Its function is as follows. Binds the lower part of the 30S subunit head. Binds mRNA in the 70S ribosome, positioning it for translation. The sequence is that of Small ribosomal subunit protein uS3 from Rickettsia massiliae (strain Mtu5).